Here is a 913-residue protein sequence, read N- to C-terminus: Pentatricopeptide repeat-containing protein At1g10270 (913 aa).

The disordered stretch occupies residues 34–138 (SLSPANEDPE…PNAPRLPDST (105 aa)). A compositionally biased stretch (polar residues) spans 64 to 73 (DPSQFQIPQN). A compositionally biased stretch (pro residues) spans 74-84 (HTPPIPYPPIP). A Nuclear localization signal motif is present at residues 99–108 (ERRRRKRRLR). A compositionally biased stretch (basic and acidic residues) spans 108–130 (RIEPPLHALRRDPSAPPPKRDPN). Residues 134 to 167 (LPDSTSALVGQRLNLHNRVQSLIRASDLDAASKL) form a leucine-zipper region. 11 PPR repeats span residues 179–214 (TVFT…NIVP), 215–250 (NVVS…PFAP), 251–285 (SSVT…GQAA), 286–316 (DSTV…LKSK), 321–355 (DGIV…KFRM), 356–390 (HPPT…HAPP), 396–426 (NSDT…VGSK), 435–469 (DYLG…SLPA), 470–504 (DAPS…NLRV), 505–539 (VADF…EPKP), and 540–574 (DPSI…NVGV). A disordered region spans residues 607–913 (RNAGQSGNTP…QEKKVVELRN (307 aa)). Positions 639–649 (WTSQGVVHSNS) are enriched in polar residues. 2 stretches are compositionally biased toward low complexity: residues 650-666 (GWAN…AYKA) and 673-690 (SWSN…SNQT). The tract at residues 674 to 858 (WSNTSDNQQQ…TAQQQWSNQT (185 aa)) is 14 X 11 AA approximate tandem repeats of W-x(2)-Q-x(4)-Q-x(2). Residues 691–700 (AGQQPPSWSR) are compositionally biased toward polar residues. Low complexity predominate over residues 706–727 (QQQQSWSQQSGWSSPSGHQQSW). Positions 728–761 (TNQTAGQQQPWANQTPGQQQQWANQTPGQQQQLA) are enriched in polar residues. Residues 762-791 (NQTPGQQQQWANQTPGQQQQWANQNNGHQQ) are compositionally biased toward low complexity. The segment covering 792–814 (PWANQNTGHQQSWANQTPSQQQP) has biased composition (polar residues). A compositionally biased stretch (low complexity) spans 815 to 845 (WANQTTGQQQGWGNQTTGQQQQWANQTAGQQ). 2 stretches are compositionally biased toward polar residues: residues 846–867 (SGWT…SQWL) and 875–894 (ANQT…QQEP). Over residues 899–913 (ECQETQEKKVVELRN) the composition is skewed to basic and acidic residues.

It belongs to the PPR family. P subfamily. As to quaternary structure, interacts with RPB36B through its WQQ domain. Ubiquitous but preferentially expressed in gametophytes and young embryos.

The protein localises to the nucleus. Functionally, may function as a transcriptional regulator essential for early embryogenesis. The sequence is that of Pentatricopeptide repeat-containing protein At1g10270 (GRP23) from Arabidopsis thaliana (Mouse-ear cress).